The sequence spans 418 residues: UDP-N-acetylglucosamine 1-carboxyvinyltransferase (418 aa).

22–23 lines the phosphoenolpyruvate pocket; that stretch reads KN. R91 is a binding site for UDP-N-acetyl-alpha-D-glucosamine. C115 (proton donor) is an active-site residue. At C115 the chain carries 2-(S-cysteinyl)pyruvic acid O-phosphothioketal. Residues 120-124, 160-163, D305, and I327 each bind UDP-N-acetyl-alpha-D-glucosamine; these read RPVDL and KVSV.

This sequence belongs to the EPSP synthase family. MurA subfamily.

It localises to the cytoplasm. The catalysed reaction is phosphoenolpyruvate + UDP-N-acetyl-alpha-D-glucosamine = UDP-N-acetyl-3-O-(1-carboxyvinyl)-alpha-D-glucosamine + phosphate. It functions in the pathway cell wall biogenesis; peptidoglycan biosynthesis. Cell wall formation. Adds enolpyruvyl to UDP-N-acetylglucosamine. The chain is UDP-N-acetylglucosamine 1-carboxyvinyltransferase from Baumannia cicadellinicola subsp. Homalodisca coagulata.